A 138-amino-acid polypeptide reads, in one-letter code: MAKPIPKIGSRKNARSGSRKHLRKIPKGIIHVQASFNNTIVTVTDVRGRVISWSSAGTCGFKGTRRGTPFAAQTAAGNAIRTVADQGMQRAEVMIKGPGLGRDAALRAIRRSGILLNFIRDVTPMPHNGCRSPKKRRV.

Positions 1 to 22 (MAKPIPKIGSRKNARSGSRKHL) are disordered. Basic residues predominate over residues 9-22 (GSRKNARSGSRKHL).

The protein belongs to the universal ribosomal protein uS11 family. In terms of assembly, part of the 30S ribosomal subunit.

It localises to the plastid. It is found in the chloroplast. In Lotus japonicus (Lotus corniculatus var. japonicus), this protein is Small ribosomal subunit protein uS11c.